The chain runs to 380 residues: Alcohol dehydrogenase 1 (380 aa).

Zn(2+) contacts are provided by Cys-48, Thr-50, His-70, Cys-100, Cys-103, Cys-106, Cys-114, and Cys-178. The an alcohol site is built by Thr-50 and His-70. An NAD(+)-binding site is contributed by Thr-50. Residues 203-208 (GLGAVG), Asp-227, Arg-232, Thr-273, Val-296, 296-298 (VGV), and Arg-373 contribute to the NAD(+) site.

Belongs to the zinc-containing alcohol dehydrogenase family. Homodimer. Zn(2+) is required as a cofactor.

The protein resides in the cytoplasm. The enzyme catalyses a primary alcohol + NAD(+) = an aldehyde + NADH + H(+). It carries out the reaction a secondary alcohol + NAD(+) = a ketone + NADH + H(+). This is Alcohol dehydrogenase 1 from Pisum sativum (Garden pea).